Reading from the N-terminus, the 207-residue chain is Large ribosomal subunit protein bL25 (207 aa).

This sequence belongs to the bacterial ribosomal protein bL25 family. CTC subfamily. Part of the 50S ribosomal subunit; part of the 5S rRNA/L5/L18/L25 subcomplex. Contacts the 5S rRNA. Binds to the 5S rRNA independently of L5 and L18.

Its function is as follows. This is one of the proteins that binds to the 5S RNA in the ribosome where it forms part of the central protuberance. This Bordetella petrii (strain ATCC BAA-461 / DSM 12804 / CCUG 43448) protein is Large ribosomal subunit protein bL25.